Reading from the N-terminus, the 387-residue chain is Peptostreptococcal albumin-binding protein (387 aa).

Residues 1–26 form the signal peptide; the sequence is MKLNKKLLMAALAGAIVVGGGVNTFA. A disordered region spans residues 122–155; it reads LFDKHELGGLGKDKGPGRFDENGWENNEHGYETR. Residues 213–265 are GA module; sequence TIDQWLLKNAKEDAIAELKKAGITSDFYFNAINKAKTVEEVNALKNEILKAHA. The segment at 266 to 360 is disordered; it reads GKEVNPSTPE…EKAALPEAGR (95 aa). Positions 270 to 282 are enriched in polar residues; sequence NPSTPEVTPSVPQ. Over residues 298–360 the composition is skewed to basic and acidic residues; the sequence is GTKEDGKKEN…EKAALPEAGR (63 aa). The LPXTG sorting signal motif lies at 355-359; that stretch reads LPEAG. Position 358 is a pentaglycyl murein peptidoglycan amidated alanine (Ala358). A propeptide spans 359 to 387 (removed by sortase); the sequence is GRRKAEILTLAAASLSSVAGAFISLKKRK.

The protein resides in the secreted. It is found in the cell wall. Functionally, binds serum albumin. In Finegoldia magna (Peptostreptococcus magnus), this protein is Peptostreptococcal albumin-binding protein (pab).